Reading from the N-terminus, the 489-residue chain is Bifunctional protein HldE (489 aa).

Residues 1-330 (MFDFDGLSNA…RKILPPAFLA (330 aa)) are ribokinase. 205-208 (NRKE) provides a ligand contact to ATP. Residue D275 is part of the active site. Positions 358 to 489 (FTNGCFDILH…SLVKRAGGRA (132 aa)) are cytidylyltransferase.

This sequence in the N-terminal section; belongs to the carbohydrate kinase PfkB family. In the C-terminal section; belongs to the cytidylyltransferase family. Homodimer.

The enzyme catalyses D-glycero-beta-D-manno-heptose 7-phosphate + ATP = D-glycero-beta-D-manno-heptose 1,7-bisphosphate + ADP + H(+). The catalysed reaction is D-glycero-beta-D-manno-heptose 1-phosphate + ATP + H(+) = ADP-D-glycero-beta-D-manno-heptose + diphosphate. It participates in nucleotide-sugar biosynthesis; ADP-L-glycero-beta-D-manno-heptose biosynthesis; ADP-L-glycero-beta-D-manno-heptose from D-glycero-beta-D-manno-heptose 7-phosphate: step 1/4. The protein operates within nucleotide-sugar biosynthesis; ADP-L-glycero-beta-D-manno-heptose biosynthesis; ADP-L-glycero-beta-D-manno-heptose from D-glycero-beta-D-manno-heptose 7-phosphate: step 3/4. Catalyzes the phosphorylation of D-glycero-D-manno-heptose 7-phosphate at the C-1 position to selectively form D-glycero-beta-D-manno-heptose-1,7-bisphosphate. Its function is as follows. Catalyzes the ADP transfer from ATP to D-glycero-beta-D-manno-heptose 1-phosphate, yielding ADP-D-glycero-beta-D-manno-heptose. The protein is Bifunctional protein HldE of Nitrobacter hamburgensis (strain DSM 10229 / NCIMB 13809 / X14).